Here is a 277-residue protein sequence, read N- to C-terminus: Hemin import ATP-binding protein HmuV (277 aa).

The ABC transporter domain occupies 19-259 (VEVADLNYSV…AIIEEAFGHR (241 aa)). ATP is bound at residue 51-58 (GRNGAGKS).

It belongs to the ABC transporter superfamily. Heme (hemin) importer (TC 3.A.1.14.5) family. As to quaternary structure, the complex is composed of two ATP-binding proteins (HmuV), two transmembrane proteins (HmuU) and a solute-binding protein (HmuT).

The protein localises to the cell membrane. In terms of biological role, part of the ABC transporter complex HmuTUV involved in hemin import. Responsible for energy coupling to the transport system. This is Hemin import ATP-binding protein HmuV from Deinococcus geothermalis (strain DSM 11300 / CIP 105573 / AG-3a).